The following is a 1004-amino-acid chain: Caspase recruitment domain-containing protein 14 (1004 aa).

Residues 15 to 107 enclose the CARD domain; the sequence is DEETLWEMME…DVYTLVTGLQ (93 aa). Residues 128-409 are a coiled coil; that stretch reads LAGAIGSLQE…RTQLRQLQAE (282 aa). The interval 409 to 568 is maintains the protein in an inactive state; it reads EPPGVLKQEA…RRPARRILSQ (160 aa). Ser544 carries the post-translational modification Phosphoserine. The region spanning 568–658 is the PDZ domain; the sequence is QVTMLAFQGD…FCCLSVKVNT (91 aa). A Guanylate kinase-like domain is found at 807–990; the sequence is AESCLTLVPY…LLSCVRQAIA (184 aa).

In terms of assembly, interacts (via CARD domain) with BCL10 (via CARD domain). Forms a complex with MALT1 and BCL10; resulting in the formation of a CBM (CARD14-BLC10-MALT1) complex. Interacts with TRAF2, TRAF3 and TRAF6. In terms of tissue distribution, isoform 1 is detected in placenta and epidermal keratinocytes. Isoform 2 is detected in leukocytes and fetal brain.

The protein resides in the cytoplasm. Its function is as follows. Acts as a scaffolding protein that can activate the inflammatory transcription factor NF-kappa-B and p38/JNK MAP kinase signaling pathways. Forms a signaling complex with BCL10 and MALT1, and activates MALT1 proteolytic activity and inflammatory gene expression. MALT1 is indispensable for CARD14-induced activation of NF-kappa-B and p38/JNK MAP kinases. May play a role in signaling mediated by TRAF2, TRAF3 and TRAF6 and protects cells against apoptosis. Not able to activate the inflammatory transcription factor NF-kappa-B and may function as a dominant negative regulator. This chain is Caspase recruitment domain-containing protein 14 (CARD14), found in Homo sapiens (Human).